The primary structure comprises 352 residues: Blue-sensitive opsin (352 aa).

The Extracellular segment spans residues 1–42; it reads MRGNRLVEFPDDFWIPIPLDTNNVTALSPFLVPQDHLGSPTI. An N-linked (GlcNAc...) asparagine glycan is attached at N23. A helical transmembrane segment spans residues 43-67; that stretch reads FYSMSALMFVLFVAGTAINLLTIAC. At 68–79 the chain is on the cytoplasmic side; that stretch reads TLQYKKLRSHLN. Residues 80–105 traverse the membrane as a helical segment; that stretch reads YILVNMAVANLIVASTGSSTCFVCFA. Topologically, residues 106–119 are extracellular; that stretch reads FKYMVLGPLGCKIE. The cysteines at positions 116 and 193 are disulfide-linked. Residues 120–139 traverse the membrane as a helical segment; it reads GFTAALGGMVSLWSLAVIAF. Over 140-158 the chain is Cytoplasmic; that stretch reads ERWLVICKPLGNFVFKSEH. The helical transmembrane segment at 159-182 threads the bilayer; the sequence is ALLCCALTWVCGLCASVPPLVGWS. The Extracellular portion of the chain corresponds to 183–208; it reads RYIPEGMQCSCGPDWYTTGNKFNNES. The N-linked (GlcNAc...) asparagine glycan is linked to N206. The helical transmembrane segment at 209–236 threads the bilayer; it reads FVMFLFCFCFAVPFSIIVFCYSQLLFTL. Over 237–258 the chain is Cytoplasmic; sequence KMAAKAQADSASTQKAEKEVTR. A helical membrane pass occupies residues 259-282; that stretch reads MVVVMVVAFLVCYVPYASFALWVI. Over 283-290 the chain is Extracellular; that stretch reads NNRGQTFD. Residues 291-315 traverse the membrane as a helical segment; it reads LRLATIPSCVSKASTVYNPVIYVLL. At K302 the chain carries N6-(retinylidene)lysine. Residues 316–352 are Cytoplasmic-facing; that stretch reads NKQFRLCMKKMLGMSADEDEESSTSQSTTEVSKVGPS. Residues 332–352 form a disordered region; sequence DEDEESSTSQSTTEVSKVGPS.

It belongs to the G-protein coupled receptor 1 family. Opsin subfamily. Post-translationally, phosphorylated on some or all of the serine and threonine residues present in the C-terminal region. In terms of tissue distribution, the color pigments are found in the cone photoreceptor cells.

Its subcellular location is the membrane. Visual pigments are the light-absorbing molecules that mediate vision. They consist of an apoprotein, opsin, covalently linked to cis-retinal. This is Blue-sensitive opsin from Oryzias latipes (Japanese rice fish).